We begin with the raw amino-acid sequence, 198 residues long: tRNA (pseudouridine(54)-N(1))-methyltransferase (198 aa).

S-adenosyl-L-methionine contacts are provided by residues Leu130, Gly153, 176–181 (LSPLEL), and Cys186.

It belongs to the methyltransferase superfamily. TrmY family. In terms of assembly, homodimer.

It localises to the cytoplasm. The enzyme catalyses pseudouridine(54) in tRNA + S-adenosyl-L-methionine = N(1)-methylpseudouridine(54) in tRNA + S-adenosyl-L-homocysteine + H(+). In terms of biological role, specifically catalyzes the N1-methylation of pseudouridine at position 54 (Psi54) in tRNAs. The protein is tRNA (pseudouridine(54)-N(1))-methyltransferase of Methanococcus maripaludis (strain C6 / ATCC BAA-1332).